Consider the following 53-residue polypeptide: UPF0391 membrane protein ECA0470 (53 aa).

The next 2 helical transmembrane spans lie at 4-24 and 30-47; these read WGII…GGLA and AAKI…VSLF.

The protein belongs to the UPF0391 family.

It localises to the cell membrane. This Pectobacterium atrosepticum (strain SCRI 1043 / ATCC BAA-672) (Erwinia carotovora subsp. atroseptica) protein is UPF0391 membrane protein ECA0470.